The primary structure comprises 310 residues: Putative F-box protein PP2-B2 (310 aa).

The segment at 1 to 34 is disordered; that stretch reads MIQSTMGHKQSVDSRGKGRKVPGSSSMVQKHRVE. The F-box domain maps to 44–90; the sequence is PSLFDNLPEDCISNIISFTSPRDACVAASVSKTFESAVNSDSVWDKF.

This Arabidopsis thaliana (Mouse-ear cress) protein is Putative F-box protein PP2-B2 (PP2B2).